An 87-amino-acid chain; its full sequence is Small ribosomal subunit protein bS16 (87 aa).

Belongs to the bacterial ribosomal protein bS16 family.

The sequence is that of Small ribosomal subunit protein bS16 from Ehrlichia ruminantium (strain Welgevonden).